We begin with the raw amino-acid sequence, 176 residues long: Cytochrome b (176 aa).

3 helical membrane-spanning segments follow: residues Phe33–Met53, Trp77–Val98, and Trp113–Leu133. Heme b is bound by residues His83 and His97.

Belongs to the cytochrome b family. In terms of assembly, the cytochrome bc1 complex contains 11 subunits: 3 respiratory subunits (MT-CYB, CYC1 and UQCRFS1), 2 core proteins (UQCRC1 and UQCRC2) and 6 low-molecular weight proteins (UQCRH/QCR6, UQCRB/QCR7, UQCRQ/QCR8, UQCR10/QCR9, UQCR11/QCR10 and a cleavage product of UQCRFS1). This cytochrome bc1 complex then forms a dimer. It depends on heme b as a cofactor.

The protein resides in the mitochondrion inner membrane. In terms of biological role, component of the ubiquinol-cytochrome c reductase complex (complex III or cytochrome b-c1 complex) that is part of the mitochondrial respiratory chain. The b-c1 complex mediates electron transfer from ubiquinol to cytochrome c. Contributes to the generation of a proton gradient across the mitochondrial membrane that is then used for ATP synthesis. This chain is Cytochrome b (MT-CYB), found in Tomopeas ravum (Blunt-eared bat).